Reading from the N-terminus, the 102-residue chain is MNGIPMEHGLLLAAVLFCIGLCGLLIRRNLLFILMSIEIMMNASALAFVVAGSRWAQADGQIMYILVISLAAAEASIGLALLLLLYRRYHTLNVDTVSEMRG.

The next 3 helical transmembrane spans lie at 6–26, 30–50, and 65–85; these read MEHG…GLLI, LLFI…AFVV, and ILVI…LLLL.

Belongs to the complex I subunit 4L family. NDH-1 is composed of 14 different subunits. Subunits NuoA, H, J, K, L, M, N constitute the membrane sector of the complex.

Its subcellular location is the cell inner membrane. The catalysed reaction is a quinone + NADH + 5 H(+)(in) = a quinol + NAD(+) + 4 H(+)(out). Functionally, NDH-1 shuttles electrons from NADH, via FMN and iron-sulfur (Fe-S) centers, to quinones in the respiratory chain. The immediate electron acceptor for the enzyme in this species is believed to be ubiquinone. Couples the redox reaction to proton translocation (for every two electrons transferred, four hydrogen ions are translocated across the cytoplasmic membrane), and thus conserves the redox energy in a proton gradient. The protein is NADH-quinone oxidoreductase subunit K of Aeromonas hydrophila subsp. hydrophila (strain ATCC 7966 / DSM 30187 / BCRC 13018 / CCUG 14551 / JCM 1027 / KCTC 2358 / NCIMB 9240 / NCTC 8049).